The primary structure comprises 565 residues: MKTTIILILLTHWVYSQNPTSGNNTATLCLGHHAVANGTLVKTITDDQIEVTNATELVQSISIGKICNNSYRVLDGRNCTLIDAMLGDPHCDVFQYENWDLFIERSSAFSNCYPYDIPDYASLRSIVASSGTLEFTAEGFTWTGVTQNGRSGACKRGSADSFFSRLNWLTKSGNSYPILNVTMPNNKNFDKLYIWGIHHPSSNKEQTKLYIQESGRVTVSTERSQQTVIPNIGSRPWVRGQSGRISIYWTIVKPGDILTINSNGNLVAPRGYFKLRTGKSSVMRSDAPIDTCVSECITPNGSIPNDKPFQNVNKVTYGKCPKYIRQNTLKLATGMRNVPEKQIRGIFGAIAGFIENGWEGMVDGWYGFRYQNSEGTGQAADLKSTQAAIDQINGKLNRVIERTNEKFHQIEKEFSEVEGRIQDLEKYVEDTKIDLWSYNAELLVALENQHTIDLTDAEMNKLFEKTRRQLRENAEDMGGGCFKIYHKCDNACIGSIRNGTYDHYIYRDEALNNRFQIKGVELKSGYKDWILWISFAISCFLICVVLLGFIMWACQKGNIRCNICI.

Residues 1 to 16 (MKTTIILILLTHWVYS) form the signal peptide. Residues 17 to 529 (QNPTSGNNTA…VELKSGYKDW (513 aa)) are Extracellular-facing. N-linked (GlcNAc...) asparagine; by host glycosylation is found at asparagine 23, asparagine 37, asparagine 53, asparagine 68, and asparagine 78. Intrachain disulfides connect cysteine 29-cysteine 481, cysteine 67-cysteine 292, cysteine 79-cysteine 91, cysteine 112-cysteine 154, cysteine 296-cysteine 320, and cysteine 488-cysteine 492. Residues asparagine 180 and asparagine 300 are each glycosylated (N-linked (GlcNAc...) asparagine; by host). N-linked (GlcNAc...) asparagine; by host glycosylation occurs at asparagine 498. Residues 530 to 550 (ILWISFAISCFLICVVLLGFI) form a helical membrane-spanning segment. The Cytoplasmic portion of the chain corresponds to 551 to 565 (MWACQKGNIRCNICI). Residues cysteine 554, cysteine 561, and cysteine 564 are each lipidated (S-palmitoyl cysteine; by host).

Belongs to the influenza viruses hemagglutinin family. In terms of assembly, homotrimer of disulfide-linked HA1-HA2. Post-translationally, palmitoylated. In terms of processing, in natural infection, inactive HA is matured into HA1 and HA2 outside the cell by one or more trypsin-like, arginine-specific endoprotease secreted by the bronchial epithelial cells. One identified protease that may be involved in this process is secreted in lungs by club cells.

It is found in the virion membrane. Its subcellular location is the host apical cell membrane. Its function is as follows. Binds to sialic acid-containing receptors on the cell surface, bringing about the attachment of the virus particle to the cell. This attachment induces virion internalization of about two third of the virus particles through clathrin-dependent endocytosis and about one third through a clathrin- and caveolin-independent pathway. Plays a major role in the determination of host range restriction and virulence. Class I viral fusion protein. Responsible for penetration of the virus into the cell cytoplasm by mediating the fusion of the membrane of the endocytosed virus particle with the endosomal membrane. Low pH in endosomes induces an irreversible conformational change in HA2, releasing the fusion hydrophobic peptide. Several trimers are required to form a competent fusion pore. In terms of biological role, binds to sialic acid-containing receptors on the cell surface, bringing about the attachment of the virus particle to the cell. This attachment induces virion internalization either through clathrin-dependent endocytosis or through clathrin- and caveolin-independent pathway. Plays a major role in the determination of host range restriction and virulence. Class I viral fusion protein. Responsible for penetration of the virus into the cell cytoplasm by mediating the fusion of the membrane of the endocytosed virus particle with the endosomal membrane. Low pH in endosomes induces an irreversible conformational change in HA2, releasing the fusion hydrophobic peptide. Several trimers are required to form a competent fusion pore. The chain is Hemagglutinin from Influenza A virus (strain A/Equine/Suffolk/1989 H3N8).